The chain runs to 249 residues: UPF0696 protein C11orf68 homolog (249 aa).

It belongs to the UPF0696 family.

This is UPF0696 protein C11orf68 homolog from Danio rerio (Zebrafish).